Consider the following 299-residue polypeptide: Nucleotide-binding protein DIP1313 (299 aa).

Residue 22–29 (GLSGAGLS) participates in ATP binding. A GTP-binding site is contributed by 73–76 (DVRS).

This sequence belongs to the RapZ-like family.

In terms of biological role, displays ATPase and GTPase activities. The polypeptide is Nucleotide-binding protein DIP1313 (Corynebacterium diphtheriae (strain ATCC 700971 / NCTC 13129 / Biotype gravis)).